We begin with the raw amino-acid sequence, 450 residues long: MSAIQASWPSGTECIAKYNFHGTAEQDLPFCKGDVLTIVAVTKDPNWYKAKNKVGREGIIPANYVQKREGVKAGTKLSLMPWFHGKITREQAERLLYPPETGLFLVRESTNYPGDYTLCVSCEGKVEHYRIMYHASKLSIDEEVYFENLMQLVEHYTTDADGLCTRLIKPKVMEGTVAAQDEFYRSGWALNMKELKLLQTIGKGEFGDVMLGDYRGNKVAVKCIKNDATAQAFLAEASVMTQLRHSNLVQLLGVIVEEKGGLYIVTEYMAKGSLVDYLRSRGRSVLGGDCLLKFSLDVCEAMEYLEGNNFVHRDLAARNVLVSEDNVAKVSDFGLTKEASSTQDTGKLPVKWTAPEALREKKFSTKSDVWSFGILLWEIYSFGRVPYPRIPLKDVVPRVEKGYKMDAPDGCPPAVYDVMKNCWHLDAATRPTFLQLREQLEHIRTHELHL.

N-acetylserine is present on Ser2. Residues 9–70 (PSGTECIAKY…PANYVQKREG (62 aa)) enclose the SH3 domain. Residues 9–70 (PSGTECIAKY…PANYVQKREG (62 aa)) form an interaction with PTPN22 region. Residues 82-171 (WFHGKITREQ…GLCTRLIKPK (90 aa)) enclose the SH2 domain. Residue Tyr184 is modified to Phosphotyrosine. One can recognise a Protein kinase domain in the interval 195-445 (LKLLQTIGKG…LREQLEHIRT (251 aa)). Residues 201 to 209 (IGKGEFGDV) and Lys222 contribute to the ATP site. Position 304 is a phosphotyrosine (Tyr304). Asp314 serves as the catalytic Proton acceptor. The residue at position 364 (Ser364) is a Phosphoserine; by PKA. A Phosphotyrosine; by autocatalysis modification is found at Tyr416.

The protein belongs to the protein kinase superfamily. Tyr protein kinase family. CSK subfamily. Homodimer (via SH3-domain). Interacts with PTPN22. Interacts with phosphorylated SIT1, PAG1, LIME1 and TGFB1I1; these interactions serve to recruit CSK to the membrane where it can phosphorylate and inhibit Src-family kinases. Interacts with SRCIN1. Interacts with RHOH. Interacts (via SH2 domain) with SCIMP; this interaction is dependent on phosphorylation of SCIMP 'Tyr-96'. Interacts (via SH2 domain) with PRAG1 (when phosphorylated at 'Tyr-391'); this interaction prevents translocation of CSK from the cytoplasm to the membrane leading to increased activity of CSK. Interacts with LRRK1. Mn(2+) serves as cofactor. The cofactor is Mg(2+). Phosphorylated at Ser-364 by PKA, leading to increased activity. Autophosphorylated. Enriched in lymphoid tissues.

It is found in the cytoplasm. The protein localises to the cell membrane. The catalysed reaction is L-tyrosyl-[protein] + ATP = O-phospho-L-tyrosyl-[protein] + ADP + H(+). Non-receptor tyrosine-protein kinase that plays an important role in the regulation of cell growth, differentiation, migration and immune response. Phosphorylates tyrosine residues located in the C-terminal tails of Src-family kinases (SFKs) including LCK, SRC, HCK, FYN, LYN, CSK or YES1. Upon tail phosphorylation, Src-family members engage in intramolecular interactions between the phosphotyrosine tail and the SH2 domain that result in an inactive conformation. To inhibit SFKs, CSK is recruited to the plasma membrane via binding to transmembrane proteins or adapter proteins located near the plasma membrane. Suppresses signaling by various surface receptors, including T-cell receptor (TCR) and B-cell receptor (BCR) by phosphorylating and maintaining inactive several positive effectors such as FYN or LCK. The protein is Tyrosine-protein kinase CSK (Csk) of Rattus norvegicus (Rat).